We begin with the raw amino-acid sequence, 1133 residues long: MVKLSIVLTPQFLSHDQGQLTKELQQHVKSVTCPCEYLRKVINTLADHHHRGTDFGGSPWLHVIIAFPTSYKVVITLWIVYLWVSLLKTIFWSRNGHDGSTDVQQRAWRSNRRRQEGLRSICMHTKKRVSSFRGNKIGLKDVITLRRHVETKVRAKIRKRKVTTKINHHDKINGKRKTARKQKMFQRAQELRRRAEDYHKCKIPPSARKALCNWVRMAAAEHRHSSGLPYWPYLTAETLKNRMGHQPPPPTQQHSITDNSLSLKTPPECLLTPLPPSADDNLKTPPECVLTPLPPSADDNLKTPPECVLTPLPPSADDNLKTPPECLLTPLPPSADDNLKTPPECLLTPLPPSALPSAPPSADDNLKTRAECLLHPLPPSADDNLKTPSERQLTPLPPSAPPSADDNIKTPAERLRGPLPPSADDNLKTPSERQLTPLPPSAPPSADDNIKTPAERLRGPLPPSADDNLKTPSERQLTPLPPSAPPSADDNIKTPAERLRGPLPPSADDNLKTPSERQLTALPPSADDNIKTPAERLRGPLPPSADDNLKTPSERQLTPLPPSAPPSADDNIKTPAFHPQRMISRHLPSVSSLPFHPQLHPQQMIISRYLLSVCGFRFHHQPMIISRHLPSVSSLPFHPQLHPQQMIISRHLPSVCGGRFHPERMIISRHLPSVSSLPFHPQLHPQQMIISRHLPSVCGGRFHPQQMIISRHLPSVSSLPFHPQLHPQQMIISRHLPSVCGGRFHPQRMIISRHLPSVSSLPFHPQLHPQQMIISRHLPSVCGGRFHPQQMIISRHLPSVSSLPFHPQLHPQQMIISRHLPSVCGGRFHPQRMIISRHLPSVSSLPFHPQLHPQQMIISRHLPSVCGERLRGPLPPSADDNLKTPSERQLTPLPPSAPPSADDNIKTPAERLRGPLPPSADDNLKTPSERQLTPLPPSAPPSADDNIKTPAERLRGPLPPSADDNLKTPSERQLTPLPPSAPPSADDNIKTPAERLRGPLPPSADDNLKTPPLATQEAEAEKPRKPKRQRAAEMEPPPEPKRRRVGDVEPSRKPKRRRAADVEPSSPEPKRRRVGDVEPSRKPKRRRAADVEPSSPEPKRRRVGDVEPSRKPKRRRAADVEPSLPEPKRRRLS.

The helical transmembrane segment at 60-84 (WLHVIIAFPTSYKVVITLWIVYLWV) threads the bilayer. 3 disordered regions span residues 241–262 (NRMG…NSLS), 290–575 (LTPL…IKTP), and 868–1133 (ERLR…RRLS). Over residues 252–262 (QQHSITDNSLS) the composition is skewed to polar residues. Residues 349–359 (PLPPSALPSAP) show a composition bias toward pro residues. Composition is skewed to basic and acidic residues over residues 406-416 (DNIKTPAERLR), 448-458 (DNIKTPAERLR), 490-500 (DNIKTPAERLR), 528-538 (DNIKTPAERLR), 903-913 (DNIKTPAERLR), 945-955 (DNIKTPAERLR), and 987-997 (DNIKTPAERLR).

This sequence belongs to the NPIP family.

The protein resides in the membrane. The protein is Nuclear pore complex-interacting protein family member B5 (NPIPB5) of Homo sapiens (Human).